Reading from the N-terminus, the 129-residue chain is Aspartate 1-decarboxylase (129 aa).

The active-site Schiff-base intermediate with substrate; via pyruvic acid is the S25. A Pyruvic acid (Ser) modification is found at S25. T57 provides a ligand contact to substrate. Y58 acts as the Proton donor in catalysis. Substrate is bound at residue G73–A75.

It belongs to the PanD family. As to quaternary structure, heterooctamer of four alpha and four beta subunits. Pyruvate is required as a cofactor. Post-translationally, is synthesized initially as an inactive proenzyme, which is activated by self-cleavage at a specific serine bond to produce a beta-subunit with a hydroxyl group at its C-terminus and an alpha-subunit with a pyruvoyl group at its N-terminus.

Its subcellular location is the cytoplasm. The catalysed reaction is L-aspartate + H(+) = beta-alanine + CO2. Its pathway is cofactor biosynthesis; (R)-pantothenate biosynthesis; beta-alanine from L-aspartate: step 1/1. Its function is as follows. Catalyzes the pyruvoyl-dependent decarboxylation of aspartate to produce beta-alanine. In Prosthecochloris aestuarii (strain DSM 271 / SK 413), this protein is Aspartate 1-decarboxylase.